A 102-amino-acid polypeptide reads, in one-letter code: Small ribosomal subunit protein uS10 (102 aa).

The protein belongs to the universal ribosomal protein uS10 family. As to quaternary structure, part of the 30S ribosomal subunit.

Functionally, involved in the binding of tRNA to the ribosomes. This is Small ribosomal subunit protein uS10 from Kineococcus radiotolerans (strain ATCC BAA-149 / DSM 14245 / SRS30216).